Here is a 373-residue protein sequence, read N- to C-terminus: L-threonine 3-dehydrogenase, mitochondrial (373 aa).

Residues 62–67 (GGLGQL), 88–90 (DIR), 106–107 (DI), Tyr-195, Lys-199, and Ile-225 each bind NAD(+). Tyr-195 serves as the catalytic Proton donor/acceptor.

It belongs to the NAD(P)-dependent epimerase/dehydratase family. In terms of assembly, homodimer.

The protein resides in the mitochondrion. It carries out the reaction L-threonine + NAD(+) = (2S)-2-amino-3-oxobutanoate + NADH + H(+). It functions in the pathway amino-acid degradation; L-threonine degradation via oxydo-reductase pathway; glycine from L-threonine: step 1/2. Functionally, catalyzes the NAD(+)-dependent oxidation of L-threonine to 2-amino-3-ketobutyrate, mediating L-threonine catabolism. This is L-threonine 3-dehydrogenase, mitochondrial from Sus scrofa (Pig).